The chain runs to 340 residues: Phosphate acyltransferase (340 aa).

The protein belongs to the PlsX family. As to quaternary structure, homodimer. Probably interacts with PlsY.

The protein localises to the cytoplasm. It carries out the reaction a fatty acyl-[ACP] + phosphate = an acyl phosphate + holo-[ACP]. It functions in the pathway lipid metabolism; phospholipid metabolism. Its function is as follows. Catalyzes the reversible formation of acyl-phosphate (acyl-PO(4)) from acyl-[acyl-carrier-protein] (acyl-ACP). This enzyme utilizes acyl-ACP as fatty acyl donor, but not acyl-CoA. The polypeptide is Phosphate acyltransferase (Pseudomonas syringae pv. tomato (strain ATCC BAA-871 / DC3000)).